The sequence spans 441 residues: Actin-related protein 4 (441 aa).

The interval 48–73 (VDVDSTKTNSNSEDSKTESEKEKSKR) is disordered. Over residues 60–70 (EDSKTESEKEK) the composition is skewed to basic and acidic residues.

Belongs to the actin family. ARP4 subfamily. As to quaternary structure, component of the SWR1 chromatin-remodeling complex and of the NuA4 histone acetyltransferase complex. Interacts with the SWI/SNF complex. Interacts with EAF1A and EAF1B. In terms of tissue distribution, mostly expressed in flowers, and, to a lower extent, in roots, seedlings, leaves and siliques (at protein level).

It localises to the nucleus. It is found in the cytoplasm. Functionally, involved in several developmental processes including organization of plant organs, flowering time, anther development, flower senescence and fertility, probably by regulating the chromatin structure. In Arabidopsis thaliana (Mouse-ear cress), this protein is Actin-related protein 4.